Consider the following 322-residue polypeptide: tRNA pseudouridine synthase B (322 aa).

Over residues 1 to 11 the composition is skewed to basic and acidic residues; sequence MRPPRTTELDR. The disordered stretch occupies residues 1–22; sequence MRPPRTTELDRPMTTAASQRPR. D65 acts as the Nucleophile in catalysis.

This sequence belongs to the pseudouridine synthase TruB family. Type 1 subfamily.

It carries out the reaction uridine(55) in tRNA = pseudouridine(55) in tRNA. Responsible for synthesis of pseudouridine from uracil-55 in the psi GC loop of transfer RNAs. In Burkholderia lata (strain ATCC 17760 / DSM 23089 / LMG 22485 / NCIMB 9086 / R18194 / 383), this protein is tRNA pseudouridine synthase B.